Here is a 388-residue protein sequence, read N- to C-terminus: 3-dehydroquinate synthase (388 aa).

The protein belongs to the archaeal-type DHQ synthase family.

It carries out the reaction 2-amino-2,3,7-trideoxy-D-lyxo-hept-6-ulosonate + NAD(+) + H2O = 3-dehydroquinate + NH4(+) + NADH + H(+). Functionally, catalyzes the oxidative deamination and cyclization of 2-amino-3,7-dideoxy-D-threo-hept-6-ulosonic acid (ADH) to yield 3-dehydroquinate (DHQ), which is fed into the canonical shikimic pathway of aromatic amino acid biosynthesis. This Haloarcula marismortui (strain ATCC 43049 / DSM 3752 / JCM 8966 / VKM B-1809) (Halobacterium marismortui) protein is 3-dehydroquinate synthase.